Here is a 229-residue protein sequence, read N- to C-terminus: Ribonuclease 3 (229 aa).

Residues 5–127 form the RNase III domain; the sequence is LARLERQLGY…LIGAIYLDAG (123 aa). Mg(2+) is bound at residue Glu-40. Residue Asp-44 is part of the active site. The Mg(2+) site is built by Asp-113 and Glu-116. The active site involves Glu-116. The DRBM domain maps to 154–224; sequence DPKTRLQEFL…AAAALIALGV (71 aa).

Belongs to the ribonuclease III family. In terms of assembly, homodimer. Mg(2+) serves as cofactor.

Its subcellular location is the cytoplasm. It catalyses the reaction Endonucleolytic cleavage to 5'-phosphomonoester.. In terms of biological role, digests double-stranded RNA. Involved in the processing of primary rRNA transcript to yield the immediate precursors to the large and small rRNAs (23S and 16S). Processes some mRNAs, and tRNAs when they are encoded in the rRNA operon. Processes pre-crRNA and tracrRNA of type II CRISPR loci if present in the organism. The polypeptide is Ribonuclease 3 (Pseudomonas fluorescens (strain SBW25)).